The chain runs to 304 residues: Killer cell immunoglobulin-like receptor 2DS2 (304 aa).

Residues 1 to 21 (MSLMVVSMACVGFFLLQGAWP) form the signal peptide. The Extracellular portion of the chain corresponds to 22-245 (HEGVHRKPSL…SKTGNPRHLH (224 aa)). 2 Ig-like C2-type domains span residues 42–107 (EETV…VTHS) and 142–205 (GESV…FRDS). Intrachain disulfides connect Cys-49–Cys-100 and Cys-149–Cys-198. Residues Asn-84, Asn-178, and Asn-211 are each glycosylated (N-linked (GlcNAc...) asparagine). Positions 220–239 (VTGNPSNSWPSPTEPSSKTG) are disordered. Residues 246-265 (VLIGTSVVKIPFTILLFFLL) traverse the membrane as a helical segment. Topologically, residues 266–304 (HRWCSNKKNAAVMDQEPAGNRTVNSEDSDEQDHQEVSYA) are cytoplasmic. A disordered region spans residues 280–304 (QEPAGNRTVNSEDSDEQDHQEVSYA).

Belongs to the immunoglobulin superfamily.

It is found in the cell membrane. In terms of biological role, receptor on natural killer (NK) cells for HLA-C alleles. Does not inhibit the activity of NK cells. The polypeptide is Killer cell immunoglobulin-like receptor 2DS2 (Homo sapiens (Human)).